The primary structure comprises 267 residues: MVNLMNIKDIKLNADETKTTKAILKASFDMWLDIVEADVVIVGAGPSGLTCARYLAKEGFKVVVLERHLAFGGGTWGGGMGFPYIVVEEPADELLREVGIKLIDMGDGYYVADSVEVPAKLAVAAMDAGAKILTGIVVEDLILREDGVAGVVINSYAIERAGLHIDPLTIRSKVVVDATGHEASIVNILVKKNKLEADVPGEKSMWAEKGENALLRNTREVYPNLFVCGMAANASHGGYRMGAIFGGMYLSGKLCAELITEKLKNKE.

Residues Ser-47, 66–67 (ER), Gly-74, Val-138, and 164–166 (HID) each bind NAD(+). Residues Asp-166 and His-181 each contribute to the Fe cation site. NAD(+) contacts are provided by Ser-184 and Met-230. Position 240 (Arg-240) interacts with glycine.

This sequence belongs to the THI4 family. Homooctamer; tetramer of dimers. Fe(2+) serves as cofactor.

It catalyses the reaction hydrogen sulfide + glycine + NAD(+) = ADP-5-ethyl-4-methylthiazole-2-carboxylate + nicotinamide + 3 H2O + H(+). It functions in the pathway cofactor biosynthesis; thiamine diphosphate biosynthesis. Its function is as follows. Involved in the biosynthesis of the thiazole moiety of thiamine. Catalyzes the conversion of NAD and glycine to adenosine diphosphate 5-(2-hydroxyethyl)-4-methylthiazole-2-carboxylate (ADT), an adenylated thiazole intermediate, using free sulfide as a source of sulfur. The chain is Thiamine thiazole synthase from Methanocaldococcus jannaschii (strain ATCC 43067 / DSM 2661 / JAL-1 / JCM 10045 / NBRC 100440) (Methanococcus jannaschii).